A 957-amino-acid chain; its full sequence is Glycine dehydrogenase (decarboxylating) (957 aa).

An N6-(pyridoxal phosphate)lysine modification is found at lysine 702.

The protein belongs to the GcvP family. As to quaternary structure, the glycine cleavage system is composed of four proteins: P, T, L and H. The cofactor is pyridoxal 5'-phosphate.

The enzyme catalyses N(6)-[(R)-lipoyl]-L-lysyl-[glycine-cleavage complex H protein] + glycine + H(+) = N(6)-[(R)-S(8)-aminomethyldihydrolipoyl]-L-lysyl-[glycine-cleavage complex H protein] + CO2. Its function is as follows. The glycine cleavage system catalyzes the degradation of glycine. The P protein binds the alpha-amino group of glycine through its pyridoxal phosphate cofactor; CO(2) is released and the remaining methylamine moiety is then transferred to the lipoamide cofactor of the H protein. This chain is Glycine dehydrogenase (decarboxylating), found in Synechococcus sp. (strain RCC307).